The chain runs to 208 residues: Small ribosomal subunit protein uS4 (208 aa).

Residues Ser-31 to Ser-51 form a disordered region. The S4 RNA-binding domain occupies Arg-98–Ala-160.

Belongs to the universal ribosomal protein uS4 family. Part of the 30S ribosomal subunit. Contacts protein S5. The interaction surface between S4 and S5 is involved in control of translational fidelity.

Its function is as follows. One of the primary rRNA binding proteins, it binds directly to 16S rRNA where it nucleates assembly of the body of the 30S subunit. With S5 and S12 plays an important role in translational accuracy. This is Small ribosomal subunit protein uS4 from Helicobacter pylori (strain ATCC 700392 / 26695) (Campylobacter pylori).